The following is a 282-amino-acid chain: Ribonuclease 3 (282 aa).

One can recognise an RNase III domain in the interval 18-141; it reads FVAFFKSLNI…LVAAIYEDLG (124 aa). Glutamate 59 lines the Mg(2+) pocket. Aspartate 63 is an active-site residue. Residues aspartate 127 and glutamate 130 each contribute to the Mg(2+) site. Glutamate 130 is a catalytic residue.

This sequence belongs to the ribonuclease III family. As to quaternary structure, homodimer. Requires Mg(2+) as cofactor.

The protein localises to the cytoplasm. It carries out the reaction Endonucleolytic cleavage to 5'-phosphomonoester.. Functionally, digests double-stranded RNA. Involved in the processing of primary rRNA transcript to yield the immediate precursors to the large and small rRNAs (23S and 16S). Processes some mRNAs, and tRNAs when they are encoded in the rRNA operon. Processes pre-crRNA and tracrRNA of type II CRISPR loci if present in the organism. This Mycoplasmoides pneumoniae (strain ATCC 15531 / DSM 23978 / CIP 103766 / NBRC 14401 / NCTC 10119 / FH) (Mycoplasma pneumoniae) protein is Ribonuclease 3.